Here is a 198-residue protein sequence, read N- to C-terminus: HTH-type transcriptional regulator BetI (198 aa).

Positions 8–68 constitute an HTH tetR-type domain; the sequence is PLRRRELIDA…ATMRHLLREL (61 aa). Residues 31 to 50 constitute a DNA-binding region (H-T-H motif); the sequence is TVAQIAHEAGVSPALAHHYF.

It participates in amine and polyamine biosynthesis; betaine biosynthesis via choline pathway [regulation]. Its function is as follows. Repressor involved in the biosynthesis of the osmoprotectant glycine betaine. It represses transcription of the choline transporter BetT and the genes of BetAB involved in the synthesis of glycine betaine. This chain is HTH-type transcriptional regulator BetI, found in Brucella canis (strain ATCC 23365 / NCTC 10854 / RM-666).